We begin with the raw amino-acid sequence, 136 residues long: Protein PsiE (136 aa).

4 consecutive transmembrane segments (helical) span residues Ile-15–Leu-35, Tyr-55–Val-75, His-83–Val-103, and Pro-108–Cys-128.

This sequence belongs to the PsiE family.

Its subcellular location is the cell inner membrane. The polypeptide is Protein PsiE (Salmonella agona (strain SL483)).